The following is a 148-amino-acid chain: Large ribosomal subunit protein bL28c (148 aa).

Residues 1–71 constitute a chloroplast transit peptide; sequence MAASGMLISN…PLKPSLQPVA (71 aa).

Component of the chloroplast large ribosomal subunit (LSU). Mature 70S chloroplast ribosomes of higher plants consist of a small (30S) and a large (50S) subunit. The 30S small subunit contains 1 molecule of ribosomal RNA (16S rRNA) and 24 different proteins. The 50S large subunit contains 3 rRNA molecules (23S, 5S and 4.5S rRNA) and 33 different proteins.

It localises to the plastid. It is found in the chloroplast. In terms of biological role, component of the chloroplast ribosome (chloro-ribosome), a dedicated translation machinery responsible for the synthesis of chloroplast genome-encoded proteins, including proteins of the transcription and translation machinery and components of the photosynthetic apparatus. The sequence is that of Large ribosomal subunit protein bL28c (RPL28) from Spinacia oleracea (Spinach).